We begin with the raw amino-acid sequence, 155 residues long: Large ribosomal subunit protein uL22c (155 aa).

The protein belongs to the universal ribosomal protein uL22 family. Part of the 50S ribosomal subunit.

It is found in the plastid. The protein resides in the chloroplast. In terms of biological role, this protein binds specifically to 23S rRNA. Functionally, the globular domain of the protein is located near the polypeptide exit tunnel on the outside of the subunit, while an extended beta-hairpin is found that lines the wall of the exit tunnel in the center of the 70S ribosome. The sequence is that of Large ribosomal subunit protein uL22c (rpl22) from Coffea arabica (Arabian coffee).